A 399-amino-acid chain; its full sequence is 3-dehydroquinate synthase (399 aa).

This sequence belongs to the archaeal-type DHQ synthase family.

The enzyme catalyses 2-amino-2,3,7-trideoxy-D-lyxo-hept-6-ulosonate + NAD(+) + H2O = 3-dehydroquinate + NH4(+) + NADH + H(+). Its function is as follows. Catalyzes the oxidative deamination and cyclization of 2-amino-3,7-dideoxy-D-threo-hept-6-ulosonic acid (ADH) to yield 3-dehydroquinate (DHQ), which is fed into the canonical shikimic pathway of aromatic amino acid biosynthesis. The sequence is that of 3-dehydroquinate synthase from Haloquadratum walsbyi (strain DSM 16790 / HBSQ001).